The following is a 363-amino-acid chain: MGFSAPLSKDQASLLDERSREIFRRIVEGYLDTGEPLGSRSLSRLLPMSLSPASVRNVMSDLEELGLIYSPHISAGRLPTQTGLRFFVDAFMQVGDLPADERANIDRQIGPVAGHEQSLEGLLTEASRMLSGMSRGAGLVLTAKNDVILKHVEFIRLEPTKALAVLVGDHNQVENRIIELPAGISSSQLTEAANFINAHLSGQTLQELRGQFQTQRTELQSELGMLAQDLVERGLAIWAGDNEEGKLGRLIVRGRSNLLEGLAGEEDIDRVRMLFDDLERKENLIEILNLAESGSGVRIFIGSENKLFSLSGSSLIVAPYRDEENRVVGAVGVIGPTRLNYARIVPMVDYTAQIMARLSRKQR.

Belongs to the HrcA family.

In terms of biological role, negative regulator of class I heat shock genes (grpE-dnaK-dnaJ and groELS operons). Prevents heat-shock induction of these operons. The sequence is that of Heat-inducible transcription repressor HrcA from Rhizobium radiobacter (Agrobacterium tumefaciens).